The following is a 282-amino-acid chain: Osteoclast-associated immunoglobulin-like receptor (282 aa).

Residues 1 to 18 form the signal peptide; the sequence is MALVLILQLLTLWPLCHT. Ig-like domains lie at 22 to 116 and 126 to 219; these read PSVP…SQPS and ELPR…SWEG. N-linked (GlcNAc...) asparagine glycosylation is present at Asn48. An intrachain disulfide couples Cys53 to Cys100. Asn145 carries an N-linked (GlcNAc...) asparagine glycan. Residues 221-282 form a disordered region; the sequence is GPEARPASSA…PAPPPSDPGV (62 aa). The span at 273-282 shows a compositional bias: pro residues; that stretch reads PAPPPSDPGV.

Belongs to the leukocyte receptor complex/polymeric immunoglobulin receptor (PIR/LRC) family.

It is found in the secreted. Its subcellular location is the cell membrane. Its function is as follows. Regulator of osteoclastogenesis which plays an important bone-specific function in osteoclast differentiation. The polypeptide is Osteoclast-associated immunoglobulin-like receptor (OSCAR) (Homo sapiens (Human)).